A 239-amino-acid polypeptide reads, in one-letter code: Probable phosphatase Csac_1188 (239 aa).

Zn(2+) is bound by residues His-8, His-10, His-16, His-41, Glu-74, His-102, His-132, Asp-192, and His-194.

Belongs to the PHP family. Zn(2+) is required as a cofactor.

The protein is Probable phosphatase Csac_1188 of Caldicellulosiruptor saccharolyticus (strain ATCC 43494 / DSM 8903 / Tp8T 6331).